A 63-amino-acid polypeptide reads, in one-letter code: Cecropin-1/3 (63 aa).

A signal peptide spans 1–23 (MNFYKVFIFVALILAISLGQSEA). At arginine 62 the chain carries Arginine amide.

This sequence belongs to the cecropin family.

The protein localises to the secreted. Its function is as follows. Cecropins have lytic and antibacterial activity against several Gram-positive and Gram-negative bacteria. This is Cecropin-1/3 (Cec1) from Drosophila virilis (Fruit fly).